The sequence spans 205 residues: Nascent polypeptide-associated complex subunit alpha-like protein (205 aa).

2 disordered regions span residues 1-73 (MPSV…RKAM) and 137-166 (KAPN…DTGV). Basic and acidic residues predominate over residues 20–29 (EQQELEHSDE). Over residues 30 to 51 (PILEDDEDDDDEEDDNDEDDAQ) the composition is skewed to acidic residues. A compositionally biased stretch (basic and acidic residues) spans 56–66 (GEGKSKQSRSE). The 66-residue stretch at 63–128 (SRSEKKCRKA…AKIEDLSSQL (66 aa)) folds into the NAC-A/B domain. Over residues 155–165 (QEDEDEVDDTG) the composition is skewed to acidic residues. The UBA domain occupies 166–203 (VEPKDIELVMTQAGVSRTKAVKALKAADGDIVSAIMDL).

This sequence belongs to the NAC-alpha family.

May promote appropriate targeting of ribosome-nascent polypeptide complexes. This is Nascent polypeptide-associated complex subunit alpha-like protein from Pinus taeda (Loblolly pine).